Consider the following 162-residue polypeptide: Onchocystatin (162 aa).

The N-terminal stretch at 1 to 32 (MLTIKDGTLLIHLLLFSVVALVQLQGAKSARA) is a signal peptide. A disordered region spans residues 30-54 (ARAKNPSKMESKTGENQDRPVLLGG). A compositionally biased stretch (basic and acidic residues) spans 36-47 (SKMESKTGENQD). The short motif at 97–101 (QVVAG) is the Secondary area of contact element. An intrachain disulfide couples cysteine 115 to cysteine 128.

The protein belongs to the cystatin family. In terms of tissue distribution, expressed in the cuticle of L3 and L4 larvae, female adult, and in the eggshell of developing microfilariae.

Cysteine protease inhibitor which inhibits members of the peptidase C1 family. In the human host, inhibits CTSL/cathepsin L and CTSS/cathepsin S and to a lesser extent CTSB/cathepsin B which may cause defects in antigen processing and thereby impair antigen-driven T cell proliferation. The chain is Onchocystatin from Onchocerca volvulus.